A 500-amino-acid polypeptide reads, in one-letter code: Sulfate adenylyltransferase (500 aa).

The tract at residues 1–165 (MLSPHGGILQ…LEAIQLPAHY (165 aa)) is N-terminal. The segment at 166 to 390 (DYLNLRKSPA…LRQYNPPRYR (225 aa)) is catalytic. Glutamine 193 serves as a coordination point for sulfate. ATP contacts are provided by residues 193 to 196 (QTRN) and 287 to 290 (GRDH). Catalysis depends on residues threonine 194, arginine 195, and asparagine 196. Residue arginine 195 coordinates sulfate. Sulfate is bound at residue alanine 291. Isoleucine 329 lines the ATP pocket. Residues 391 to 500 (QGFVIVVNHE…FLEDNKFFQF (110 aa)) are required for oligomerization; adenylyl-sulfate kinase-like.

It belongs to the sulfate adenylyltransferase family. As to quaternary structure, homohexamer. Dimer of trimers.

The protein resides in the cytoplasm. The catalysed reaction is sulfate + ATP + H(+) = adenosine 5'-phosphosulfate + diphosphate. It functions in the pathway sulfur metabolism; hydrogen sulfide biosynthesis; sulfite from sulfate: step 1/3. Functionally, catalyzes the first intracellular reaction of sulfate assimilation, forming adenosine-5'-phosphosulfate (APS) from inorganic sulfate and ATP. Plays an important role in sulfate activation as a component of the biosynthesis pathway of sulfur-containing amino acids. This Eremothecium gossypii (strain ATCC 10895 / CBS 109.51 / FGSC 9923 / NRRL Y-1056) (Yeast) protein is Sulfate adenylyltransferase.